The sequence spans 278 residues: tRNA (guanine-N(7)-)-methyltransferase (278 aa).

S-adenosyl-L-methionine-binding positions include G95, 118–119 (EI), 153–154 (NA), and C173. The active site involves D176. 251-253 (TEE) contributes to the S-adenosyl-L-methionine binding site.

This sequence belongs to the class I-like SAM-binding methyltransferase superfamily. TrmB family. Forms a complex with TRM82.

The protein localises to the nucleus. The catalysed reaction is guanosine(46) in tRNA + S-adenosyl-L-methionine = N(7)-methylguanosine(46) in tRNA + S-adenosyl-L-homocysteine. Its pathway is tRNA modification; N(7)-methylguanine-tRNA biosynthesis. Catalyzes the formation of N(7)-methylguanine at position 46 (m7G46) in tRNA. In Kluyveromyces lactis (strain ATCC 8585 / CBS 2359 / DSM 70799 / NBRC 1267 / NRRL Y-1140 / WM37) (Yeast), this protein is tRNA (guanine-N(7)-)-methyltransferase.